The following is a 207-amino-acid chain: Small ribosomal subunit protein uS4 (207 aa).

The tract at residues 31 to 54 is disordered; sequence KSKFETKPGQHGRTSGSRTSDFGL. A compositionally biased stretch (polar residues) spans 42-52; sequence GRTSGSRTSDF. Residues 97 to 158 form the S4 RNA-binding domain; the sequence is SRLDNVVYRM…KAKKQLRVTE (62 aa).

This sequence belongs to the universal ribosomal protein uS4 family. In terms of assembly, part of the 30S ribosomal subunit. Contacts protein S5. The interaction surface between S4 and S5 is involved in control of translational fidelity.

In terms of biological role, one of the primary rRNA binding proteins, it binds directly to 16S rRNA where it nucleates assembly of the body of the 30S subunit. Functionally, with S5 and S12 plays an important role in translational accuracy. The chain is Small ribosomal subunit protein uS4 from Methylibium petroleiphilum (strain ATCC BAA-1232 / LMG 22953 / PM1).